The primary structure comprises 461 residues: MEKYVVVLAAGKGTRMKSKLYKVLHQVCGKAMVEHVVDAARAVKPSKIVTIVGHGAEDVEKVLAGKSEFVMQEEQLGTGHAVMQAEGQLAALEGATLVVTGDTPLFTSETFEKLFAYHEEEGNAATVLTAEAPDPFGYGRIIRDDQGNVLRIVEQKDGKPEELKVKEINTGVFCFDNQDLWAALKQVGNDNSQGEYYLTDVLEILRKAGKKVGAYKMPDFSESLGVNDRIALAEATRIMQRRINEGHMRDGVTFIDPATAYIDADVEIGNDTVIEGGVTIKVHTVIGSDCLITSGSRIVDSQIGNGVTVTSSTIEESIMEDNTDIGPNSHLRPKSLIKRGAHLGNFVEVKKAEIGENTKVGHLTYVGDATLGKDINVGCGVIFSNFDGVKKFHTTVGDKSFIGAGSTLVSPINVADHAFIAADSTITKDVGKYEMAIARGRQVNKKDYWHKLPLSEDEEWK.

Residues 1-229 (MEKYVVVLAA…FSESLGVNDR (229 aa)) form a pyrophosphorylase region. UDP-N-acetyl-alpha-D-glucosamine is bound by residues 8 to 11 (LAAG), Lys-22, Gln-72, and 77 to 78 (GT). Residue Asp-102 coordinates Mg(2+). Gly-139, Glu-154, Asn-169, and Asn-227 together coordinate UDP-N-acetyl-alpha-D-glucosamine. A Mg(2+)-binding site is contributed by Asn-227. Residues 230-250 (IALAEATRIMQRRINEGHMRD) form a linker region. Positions 251 to 461 (GVTFIDPATA…LPLSEDEEWK (211 aa)) are N-acetyltransferase. UDP-N-acetyl-alpha-D-glucosamine is bound by residues Arg-332 and Lys-350. His-362 acts as the Proton acceptor in catalysis. Positions 365 and 376 each coordinate UDP-N-acetyl-alpha-D-glucosamine. 2 residues coordinate acetyl-CoA: Ala-422 and Arg-439.

This sequence in the N-terminal section; belongs to the N-acetylglucosamine-1-phosphate uridyltransferase family. In the C-terminal section; belongs to the transferase hexapeptide repeat family. As to quaternary structure, homotrimer. Mg(2+) serves as cofactor.

Its subcellular location is the cytoplasm. The enzyme catalyses alpha-D-glucosamine 1-phosphate + acetyl-CoA = N-acetyl-alpha-D-glucosamine 1-phosphate + CoA + H(+). It carries out the reaction N-acetyl-alpha-D-glucosamine 1-phosphate + UTP + H(+) = UDP-N-acetyl-alpha-D-glucosamine + diphosphate. It participates in nucleotide-sugar biosynthesis; UDP-N-acetyl-alpha-D-glucosamine biosynthesis; N-acetyl-alpha-D-glucosamine 1-phosphate from alpha-D-glucosamine 6-phosphate (route II): step 2/2. It functions in the pathway nucleotide-sugar biosynthesis; UDP-N-acetyl-alpha-D-glucosamine biosynthesis; UDP-N-acetyl-alpha-D-glucosamine from N-acetyl-alpha-D-glucosamine 1-phosphate: step 1/1. Its pathway is bacterial outer membrane biogenesis; LPS lipid A biosynthesis. Its function is as follows. Catalyzes the last two sequential reactions in the de novo biosynthetic pathway for UDP-N-acetylglucosamine (UDP-GlcNAc). The C-terminal domain catalyzes the transfer of acetyl group from acetyl coenzyme A to glucosamine-1-phosphate (GlcN-1-P) to produce N-acetylglucosamine-1-phosphate (GlcNAc-1-P), which is converted into UDP-GlcNAc by the transfer of uridine 5-monophosphate (from uridine 5-triphosphate), a reaction catalyzed by the N-terminal domain. This Lactobacillus delbrueckii subsp. bulgaricus (strain ATCC 11842 / DSM 20081 / BCRC 10696 / JCM 1002 / NBRC 13953 / NCIMB 11778 / NCTC 12712 / WDCM 00102 / Lb 14) protein is Bifunctional protein GlmU.